The chain runs to 271 residues: Probable protein VP2 (271 aa).

3 disordered regions span residues 49 to 103 (GGPP…DAAA), 124 to 146 (QCSN…PIDT), and 203 to 271 (LQQR…RVST). The segment covering 50–61 (GPPPPGGPPPGT) has biased composition (pro residues). Over residues 87–99 (GEGGAAGPPGAGG) the composition is skewed to gly residues. Positions 207-216 (QQRESSESPK) are enriched in basic and acidic residues. Residues 217 to 238 (KAHIQRKKGRKPLQKSRRRRRQ) are compositionally biased toward basic residues. Residues 239 to 259 (YSSSSDDSESSGSSSSSSNSS) are compositionally biased toward low complexity.

Phosphorylated at C-terminal serines.

This is Probable protein VP2 from Torque teno virus (isolate Human/Japan/SANBAN/1999) (TTV).